A 658-amino-acid polypeptide reads, in one-letter code: Glycogen debranching enzyme (658 aa).

The active-site Nucleophile is the Asp336. Glu371 functions as the Proton donor in the catalytic mechanism. Residues 459–483 are disordered; that stretch reads EANGEENRDGTNSNYSDNHGKEGLG.

This sequence belongs to the glycosyl hydrolase 13 family.

The catalysed reaction is Hydrolysis of (1-&gt;6)-alpha-D-glucosidic linkages to branches with degrees of polymerization of three or four glucose residues in limit dextrin.. Its pathway is glycan degradation; glycogen degradation. Functionally, removes maltotriose and maltotetraose chains that are attached by 1,6-alpha-linkage to the limit dextrin main chain, generating a debranched limit dextrin. This Salmonella agona (strain SL483) protein is Glycogen debranching enzyme.